Here is a 267-residue protein sequence, read N- to C-terminus: 5'-nucleotidase SurE (267 aa).

A divalent metal cation contacts are provided by aspartate 9, aspartate 10, serine 40, and asparagine 97.

This sequence belongs to the SurE nucleotidase family. Requires a divalent metal cation as cofactor.

It is found in the cytoplasm. The enzyme catalyses a ribonucleoside 5'-phosphate + H2O = a ribonucleoside + phosphate. In terms of biological role, nucleotidase that shows phosphatase activity on nucleoside 5'-monophosphates. The sequence is that of 5'-nucleotidase SurE from Helicobacter pylori (strain Shi470).